Here is a 94-residue protein sequence, read N- to C-terminus: Putative pterin-4-alpha-carbinolamine dehydratase (94 aa).

Belongs to the pterin-4-alpha-carbinolamine dehydratase family.

It catalyses the reaction (4aS,6R)-4a-hydroxy-L-erythro-5,6,7,8-tetrahydrobiopterin = (6R)-L-erythro-6,7-dihydrobiopterin + H2O. This chain is Putative pterin-4-alpha-carbinolamine dehydratase, found in Koribacter versatilis (strain Ellin345).